The sequence spans 201 residues: 3-isopropylmalate dehydratase small subunit (201 aa).

Belongs to the LeuD family. LeuD type 1 subfamily. In terms of assembly, heterodimer of LeuC and LeuD.

The enzyme catalyses (2R,3S)-3-isopropylmalate = (2S)-2-isopropylmalate. It functions in the pathway amino-acid biosynthesis; L-leucine biosynthesis; L-leucine from 3-methyl-2-oxobutanoate: step 2/4. Catalyzes the isomerization between 2-isopropylmalate and 3-isopropylmalate, via the formation of 2-isopropylmaleate. The polypeptide is 3-isopropylmalate dehydratase small subunit (Mesorhizobium japonicum (strain LMG 29417 / CECT 9101 / MAFF 303099) (Mesorhizobium loti (strain MAFF 303099))).